The primary structure comprises 202 residues: Alpha-latrotoxin-Lm1a (202 aa).

10 ANK repeats span residues 95-109 (LYNAASNPDSAVGFK), 110-120 (LMESPEININE), 122-132 (NDWPVASTLLR), 133-138 (SSNVNV), 142-161 (NSDTPLNLAYFIDQGADINT), 163-170 (NGHLNIVK), 171-182 (YLVEEEDLSVDG), K184, 185-191 (YGIDMTI), and 193-202 (TALDIATDLK). The segment at 175-181 (EEDLSVD) is 4C4.1 epitope.

Belongs to the cationic peptide 01 (latrotoxin) family. 03 (alpha-latrotoxin) subfamily. As to quaternary structure, homotetramer in membranes. In terms of processing, processed by furin-like proteases at both the N- and C-termini. Post-translationally, contains 1 disulfide bond. In terms of tissue distribution, expressed in venom gland, cephalothorax, and abdomen tissues from both males and females.

It is found in the secreted. Its subcellular location is the target cell membrane. Presynaptic neurotoxin that causes massive release of neurotransmitters from vertebrate (but not invertebrate) nerve terminals and endocrine cells via a complex mechanism involving activation of receptor(s) and toxin insertion into the plasma membrane with subsequent pore formation. Binds to neurexin-1-alpha (NRXN1) in a calcium dependent manner, adhesion G protein-coupled receptor L1 (ADGRL1, also termed latrophilin-1 and calcium-independent receptor of latrotoxin (CIRL)), and receptor-type tyrosine-protein phosphatase S (PTPRS), also termed PTP sigma. NRXN1 and PTPRS are suggested to provide a platform for binding and subsequent pore formation events. In contrast, binding to ADGRL1 does not involve oligomerization and channel formation, but direct downstream stimulation of the synaptic fusion machinery. This Latrodectus mactans (Black widow spider) protein is Alpha-latrotoxin-Lm1a.